The chain runs to 212 residues: Thymidylate kinase (212 aa).

Residue 11 to 18 (GPEGAGKT) participates in ATP binding.

This sequence belongs to the thymidylate kinase family.

The enzyme catalyses dTMP + ATP = dTDP + ADP. Phosphorylation of dTMP to form dTDP in both de novo and salvage pathways of dTTP synthesis. The protein is Thymidylate kinase of Streptococcus pneumoniae (strain Hungary19A-6).